The following is a 122-amino-acid chain: MARIAGVDLPKKKRVEYGLTYIYGIGLFTSRKILNAVGISYDKRVYELSEDEAAAIRKEIQEHYMVEGDLRKSVAMDIKALMDLGSYRGLRHRKGLPVRGQKTKTNARTRKGRRKTVGAATK.

Positions 98–116 (VRGQKTKTNARTRKGRRKT) are enriched in basic residues. The disordered stretch occupies residues 98–122 (VRGQKTKTNARTRKGRRKTVGAATK).

Belongs to the universal ribosomal protein uS13 family. As to quaternary structure, part of the 30S ribosomal subunit. Forms a loose heterodimer with protein S19. Forms two bridges to the 50S subunit in the 70S ribosome.

Its function is as follows. Located at the top of the head of the 30S subunit, it contacts several helices of the 16S rRNA. In the 70S ribosome it contacts the 23S rRNA (bridge B1a) and protein L5 of the 50S subunit (bridge B1b), connecting the 2 subunits; these bridges are implicated in subunit movement. Contacts the tRNAs in the A and P-sites. The protein is Small ribosomal subunit protein uS13 of Campylobacter fetus subsp. fetus (strain 82-40).